A 287-amino-acid polypeptide reads, in one-letter code: ATP synthase gamma chain (287 aa).

This sequence belongs to the ATPase gamma chain family. F-type ATPases have 2 components, CF(1) - the catalytic core - and CF(0) - the membrane proton channel. CF(1) has five subunits: alpha(3), beta(3), gamma(1), delta(1), epsilon(1). CF(0) has three main subunits: a, b and c.

It is found in the cell inner membrane. Its function is as follows. Produces ATP from ADP in the presence of a proton gradient across the membrane. The gamma chain is believed to be important in regulating ATPase activity and the flow of protons through the CF(0) complex. In Baumannia cicadellinicola subsp. Homalodisca coagulata, this protein is ATP synthase gamma chain.